Here is a 224-residue protein sequence, read N- to C-terminus: Urease accessory protein UreF (224 aa).

It belongs to the UreF family. UreD, UreF and UreG form a complex that acts as a GTP-hydrolysis-dependent molecular chaperone, activating the urease apoprotein by helping to assemble the nickel containing metallocenter of UreC. The UreE protein probably delivers the nickel.

It is found in the cytoplasm. Functionally, required for maturation of urease via the functional incorporation of the urease nickel metallocenter. The sequence is that of Urease accessory protein UreF from Klebsiella pneumoniae (strain 342).